A 679-amino-acid chain; its full sequence is MFERNQKTIFVLDHTRYFSISSEQYISMDYLKGKPVAESPGSGSSIVGTQLSKSLWTCAVESSIEYCRIVWDLFPGKKHVRFIVSDTAAHIVNTWSPSTQNMSHVSNAMMMVSVPSRSIPQSSDYSVIHGLRAAIEALAEPTDEQLQAAHAGCKRIGNKGRVICITSARDNTSMKSLEDIFNTVLIQQNALVAPPSKKGLQIDHCHLVILNIVPLGVESLVTNRSLLEISPFLNAEIHTVNAPEISDKLLHLIMGHYDLASTTVTNIPMKEEQNANSSANYDVEILHERAAHTKVCGPDFTFTTSIKPGTAYETVTLKWCTPRGCGSADLQPCVGQYNVTPVDVTSRPSSCLINFLLNGRSVLLEVPRKSGTKTTSHMLSARGGEIFVHSLSIARSAMDEAPSITDGPGGRVPDYRIPEMGQLLKMSRLVPLKTRPKGKCSQGEHLWRRMPRYFPRTANATILFNLQRQLSWLPHFLHLLVKEDMDKQDEVRCQQQIHELYKSASRGDLLPFSNSNNARLKVNKTKDQYRLFYRELEQLIQLNAHTPHHKNLLESLQSLRAAYGDASNKSDPSAAHLRSYTESPLSPERLEPTNSVNSSSSSILKASKRRMSGCGQRSLLDIISSAERSQSSKRLDFSGRLCTPLGQTAKLYPEFGNKDKEILTPGVIPSSLKDESIRS.

Positions 519–541 form a coiled coil; the sequence is RLKVNKTKDQYRLFYRELEQLIQ. The tract at residues 564-610 is disordered; sequence GDASNKSDPSAAHLRSYTESPLSPERLEPTNSVNSSSSSILKASKRR. Positions 604-610 match the Nuclear localization signal (NLS) motif; sequence LKASKRR.

The protein belongs to the Integrator subunit 13 family. Belongs to the multiprotein complex Integrator, at least composed of IntS1, IntS2, IntS3, IntS4, omd/IntS5, IntS6, defl/IntS7, IntS8, IntS9, IntS10, IntS11, IntS12, asun/IntS13, IntS14 and IntS15. The core complex associates with protein phosphatase 2A subunits mts/PP2A and Pp2A-29B, to form the Integrator-PP2A (INTAC) complex. Post-translationally, phosphorylated.

It localises to the nucleus. The protein localises to the cytoplasm. Its subcellular location is the perinuclear region. Component of the integrator complex, a multiprotein complex that terminates RNA polymerase II (Pol II) transcription in the promoter-proximal region of genes. The integrator complex provides a quality checkpoint during transcription elongation by driving premature transcription termination of transcripts that are unfavorably configured for transcriptional elongation: the complex terminates transcription by (1) catalyzing dephosphorylation of the C-terminal domain (CTD) of Pol II subunit Polr2A/Rbp1 and Spt5, and (2) degrading the exiting nascent RNA transcript via endonuclease activity. The integrator complex is also involved in the 3'-end processing of the U7 snRNA, and also the spliceosomal snRNAs U1, U2, U4 and U5. In Drosophila mojavensis (Fruit fly), this protein is Protein asunder (asun).